The following is a 536-amino-acid chain: Fanconi anemia group E protein (536 aa).

Positions 150-371 (MEGASPLSER…VLTRSLFLGR (222 aa)) are interaction with FANCC. The interval 171–252 (LGLGGRRLKS…ADGGSASPIK (82 aa)) is disordered. Residues 230 to 239 (EKERPEHKSL) show a composition bias toward basic and acidic residues. Serine 249 carries the post-translational modification Phosphoserine. Threonine 346 is subject to Phosphothreonine; by CHEK1. Serine 374 bears the Phosphoserine; by CHEK1 mark.

In terms of assembly, belongs to the multisubunit FA complex composed of FANCA, FANCB, FANCC, FANCE, FANCF, FANCG, FANCL/PHF9 and FANCM. The complex is not found in FA patients. Interacts with FANCC and FANCD2. Phosphorylated. Phosphorylation by CHEK1 at Thr-346 and Ser-374 regulates its function in DNA cross-links repair. In terms of processing, ubiquitinated. Phosphorylation by CHEK1 induces polyubiquitination and degradation.

The protein localises to the nucleus. Functionally, as part of the Fanconi anemia (FA) complex functions in DNA cross-links repair. Required for the nuclear accumulation of FANCC and provides a critical bridge between the FA complex and FANCD2. This is Fanconi anemia group E protein (FANCE) from Homo sapiens (Human).